The primary structure comprises 318 residues: NADH-ubiquinone oxidoreductase chain 1 (318 aa).

A run of 8 helical transmembrane segments spans residues 3–23 (LINL…LTLL), 69–89 (MLFI…WTPL), 102–122 (MLFI…SGWA), 144–164 (VTLA…TLLS), 171–191 (YIWL…STLA), 222–242 (LFFL…IILF), 253–273 (ELYT…FLWI), and 294–314 (LPLT…LAGI).

The protein belongs to the complex I subunit 1 family. As to quaternary structure, core subunit of respiratory chain NADH dehydrogenase (Complex I) which is composed of 45 different subunits.

The protein localises to the mitochondrion inner membrane. The catalysed reaction is a ubiquinone + NADH + 5 H(+)(in) = a ubiquinol + NAD(+) + 4 H(+)(out). In terms of biological role, core subunit of the mitochondrial membrane respiratory chain NADH dehydrogenase (Complex I) which catalyzes electron transfer from NADH through the respiratory chain, using ubiquinone as an electron acceptor. Essential for the catalytic activity and assembly of complex I. This Murina suilla (Brown tube-nosed bat) protein is NADH-ubiquinone oxidoreductase chain 1 (MT-ND1).